Here is a 434-residue protein sequence, read N- to C-terminus: MENFNMPRSTTFYALGLSYKKADAVIRGKFSLDAQAQSDLLLQAKAEGIESLVVTSTCNRTEIYGFAHHPYELIKLLCENSNGSIEEFQQAAYIYKNEEAVSHMFRVGTGLDSQILGDFEIISQIKTAFNNSKQEGLVNTFLDRLVNTVIQASKKVKTETKISSGATSVSFASVQYIIRNVADIGSKNILLFGTGKIGRNTCENLVKHTKNSHITLINRTKNKAELLAGKLNVIVKDYADLKQELHQADVLVVATGAQNPTIDKASLALQKPLLILDLSIPRNVDANVEEIPGVTLIHLDALSQITDDTLERRKQHIPAAEAIIDDMKLELNTWVNGRKCAPTIHALKSKLNDIVSAEFAFQKKKITHFDDAQMDLISSRIIQKLTNHFASHLKNENTSVDQSIEFIEKIFQIGQLAPNKTSSPIADKYKINLS.

Substrate contacts are provided by residues 57–60 (TCNR), Ser113, 118–120 (DFE), and Gln124. Residue Cys58 is the Nucleophile of the active site. 193-198 (GTGKIG) lines the NADP(+) pocket.

Belongs to the glutamyl-tRNA reductase family. In terms of assembly, homodimer.

It carries out the reaction (S)-4-amino-5-oxopentanoate + tRNA(Glu) + NADP(+) = L-glutamyl-tRNA(Glu) + NADPH + H(+). The protein operates within porphyrin-containing compound metabolism; protoporphyrin-IX biosynthesis; 5-aminolevulinate from L-glutamyl-tRNA(Glu): step 1/2. In terms of biological role, catalyzes the NADPH-dependent reduction of glutamyl-tRNA(Glu) to glutamate 1-semialdehyde (GSA). The protein is Glutamyl-tRNA reductase 2 of Flavobacterium johnsoniae (strain ATCC 17061 / DSM 2064 / JCM 8514 / BCRC 14874 / CCUG 350202 / NBRC 14942 / NCIMB 11054 / UW101) (Cytophaga johnsonae).